We begin with the raw amino-acid sequence, 578 residues long: MDTGCLSSMNITGTSQARSFAGQLPTHRCFASSSIQALKSSQHVSFGVKSLVLRNKGKRFRRRLGALQVVCQDFPRPPLENTINFLEAGQLSSFFRNSEQPTKPLQVVIAGAGLAGLSTAKYLADAGHKPILLEARDVLGGKIAAWKDEDGDWYETGLHIFFGAYPNIQNLFGELGINDRLQWKEHSMIFAMPNKPGEFSRFDFPETLPAPLNGIWAILRNNEMLTWPEKVKFALGLLPAMVGGQAYVEAQDGFTVSEWMKKQGVPDRVNDEVFIAMSKALNFINPDELSMQCILIALNRFLQEKHGSKMAFLDGNPPERLCMPIVDHVRSLGGEVRLNSRIQKIELNPDGTVKHFALTDGTQITGDAYVFATPVDILKLLVPQEWKEISYFKKLEKLVGVPVINVHIWFDRKLKNTYDHLLFSRSSLLSVYADMSVTCKEYYDPNRSMLELVFAPAEEWVGRSDTEIIEATMQELAKLFPDEIAADQSKAKILKYHVVKTPRSVYKTIPDCEPCRPLQRSPIEGFYLAGDYTKQKYLASMEGAVLSGKLCAQSVVEDYKMLSRRSLKSLQSEVPVAS.

The N-terminal 87 residues, 1-87, are a transit peptide targeting the chloroplast and chromoplast; the sequence is MDTGCLSSMN…PLENTINFLE (87 aa). Residues Ala-115, 134-135, Lys-142, 159-160, and Tyr-165 each bind FAD; these read EA and HI. Arg-300 is a binding site for substrate. The FAD site is built by Ile-342 and Asp-531. Ala-539 serves as a coordination point for substrate. Met-541 is a binding site for FAD.

The protein belongs to the carotenoid/retinoid oxidoreductase family. Homotetramer. Homotetramer is the active form of the enzyme. The cofactor is FAD.

It localises to the plastid. The protein resides in the chloroplast. Its subcellular location is the chromoplast. The protein localises to the membrane. The catalysed reaction is 2 a plastoquinone + 15-cis-phytoene = 9,9',15-tri-cis-zeta-carotene + 2 a plastoquinol. The protein operates within carotenoid biosynthesis; lycopene biosynthesis. Inhibited by the herbicide norflurazon (NFZ). Its function is as follows. Converts phytoene into zeta-carotene via the intermediary of phytofluene by the symmetrical introduction of two double bonds at the C-11 and C-11' positions of phytoene with a concomitant isomerization of two neighboring double bonds at the C9 and C9' positions from trans to cis. Active with decylplastoquinone (DPQ) as substrate. Also active with other benzoquinones, which are strongly preferred over naphthoquinones as substrates. The sequence is that of 15-cis-phytoene desaturase, chloroplastic/chromoplastic (PDS1) from Oryza sativa subsp. indica (Rice).